A 241-amino-acid polypeptide reads, in one-letter code: Adapter protein MecA (241 aa).

Residues 77 to 102 (KNTDEDDVADESQGDASVDSEHPDQV) form a disordered region. Residues 80–89 (DEDDVADESQ) show a composition bias toward acidic residues.

The protein belongs to the MecA family. Homodimer.

Functionally, enables the recognition and targeting of unfolded and aggregated proteins to the ClpC protease or to other proteins involved in proteolysis. The chain is Adapter protein MecA from Levilactobacillus brevis (strain ATCC 367 / BCRC 12310 / CIP 105137 / JCM 1170 / LMG 11437 / NCIMB 947 / NCTC 947) (Lactobacillus brevis).